An 82-amino-acid chain; its full sequence is Small ribosomal subunit protein bS16 (82 aa).

This sequence belongs to the bacterial ribosomal protein bS16 family.

The polypeptide is Small ribosomal subunit protein bS16 (Aeromonas hydrophila subsp. hydrophila (strain ATCC 7966 / DSM 30187 / BCRC 13018 / CCUG 14551 / JCM 1027 / KCTC 2358 / NCIMB 9240 / NCTC 8049)).